The sequence spans 322 residues: Germ cell-specific gene 1-like protein (322 aa).

Over 1–8 (MELSRRNR) the chain is Cytoplasmic. A helical transmembrane segment spans residues 9–29 (SLLSVVLNLLALSFSVAAFFT). The Extracellular portion of the chain corresponds to 30 to 125 (SYWCEGTHKV…IELSPDSEKG (96 aa)). The chain crosses the membrane as a helical span at residues 126 to 146 (VLWLSVISEFLYIILLSLGFL). Over 147-166 (LMCLEFFSSSNFIDGLKINA) the chain is Cytoplasmic. The chain crosses the membrane as a helical span at residues 167 to 187 (FAAIITVLSGLLGMVAHMMYM). The Extracellular portion of the chain corresponds to 188-209 (TVFQVTVNLGPKDWRPQTWYYG). A helical transmembrane segment spans residues 210–230 (WSFGLAWLSFTLCMSASVLTL). Residues 231-322 (NTYTKTILEF…MDLEDDGDQC (92 aa)) lie on the Cytoplasmic side of the membrane.

It belongs to the GSG1 family. As to quaternary structure, component of the AMPAR complex.

It is found in the cell membrane. It localises to the synapse. Its function is as follows. As a component of the AMPAR complex, modifies AMPA receptor (AMPAR) gating. The chain is Germ cell-specific gene 1-like protein (gsg1l) from Xenopus tropicalis (Western clawed frog).